The following is a 378-amino-acid chain: Sphingosine 1-phosphate receptor 3 (378 aa).

At 1–40 the chain is on the extracellular side; the sequence is MATALPPRLQPVRGNETLREHYQYVGKLAGRLKEASEGST. A glycan (N-linked (GlcNAc...) asparagine) is linked at N15. A helical membrane pass occupies residues 41 to 65; sequence LTTVLFLVICSFIVLENLMVLIAIW. Residues 66–72 lie on the Cytoplasmic side of the membrane; the sequence is KNNKFHN. A helical membrane pass occupies residues 73–101; it reads RMYFFIGNLALCDLLAGIAYKVNILMSGK. The Extracellular segment spans residues 102-115; that stretch reads KTFSLSPTVWFLRE. A helical transmembrane segment spans residues 116-134; sequence GSMFVALGASTCSLLAIAI. The Cytoplasmic segment spans residues 135 to 153; that stretch reads ERHLTMIKMRPYDANKRHR. Residues 154-179 traverse the membrane as a helical segment; sequence VFLLIGMCWLIAFTLGALPILGWNCL. Topologically, residues 180 to 195 are extracellular; sequence HNLPDCSTILPLYSKK. The helical transmembrane segment at 196–216 threads the bilayer; that stretch reads YIAFCISIFTAILVTIVILYA. Residues 217–243 are Cytoplasmic-facing; the sequence is RIYFLVKSSSRKVANHNNSERSMALLR. Residues 244-265 traverse the membrane as a helical segment; that stretch reads TVVIVVSVFIACWSPLFILFLI. Residues 266–281 are Extracellular-facing; that stretch reads DVACRVQACPILFKAQ. The helical transmembrane segment at 282 to 302 threads the bilayer; that stretch reads WFIVLAVLNSAMNPVIYTLAS. The Cytoplasmic portion of the chain corresponds to 303-378; the sequence is KEMRRAFFRL…AALQNGIFCN (76 aa). Residue S326 is modified to Phosphoserine. A disordered region spans residues 327–357; sequence PIQPALDPSRSKSSSSNNSSHSPKVKEDLPH. A compositionally biased stretch (low complexity) spans 337-348; it reads SKSSSSNNSSHS.

This sequence belongs to the G-protein coupled receptor 1 family. In terms of tissue distribution, expressed in all tissues, but most abundantly in heart, placenta, kidney, and liver.

Its subcellular location is the cell membrane. Its function is as follows. Receptor for the lysosphingolipid sphingosine 1-phosphate (S1P). S1P is a bioactive lysophospholipid that elicits diverse physiological effect on most types of cells and tissues. When expressed in rat HTC4 hepatoma cells, is capable of mediating S1P-induced cell proliferation and suppression of apoptosis. This is Sphingosine 1-phosphate receptor 3 from Homo sapiens (Human).